The primary structure comprises 143 residues: Transcriptional regulator MraZ (143 aa).

SpoVT-AbrB domains follow at residues 5–47 and 76–119; these read EFDH…TLEE and AVEV…DRET.

The protein belongs to the MraZ family. As to quaternary structure, forms oligomers.

It localises to the cytoplasm. The protein localises to the nucleoid. The sequence is that of Transcriptional regulator MraZ from Staphylococcus epidermidis (strain ATCC 35984 / DSM 28319 / BCRC 17069 / CCUG 31568 / BM 3577 / RP62A).